Consider the following 305-residue polypeptide: Protoheme IX farnesyltransferase 1 (305 aa).

The next 9 helical transmembrane spans lie at 30-50 (IGIVNSNLVTTFTGMWLAFQF), 59-79 (LDVILFTMLGAALIIGGSGAM), 108-128 (FVLTIALSFLIVGEILLFAAS), 129-149 (FAAGMWGLAGIFAYVVLYSMW), 154-176 (HVSNTVVGSISGAIPPIIGFAAV), 180-202 (LGPGALALFLIMFAWQPPHFYAL), 232-252 (LFWILLLLPLPFLLPELGIGF), 253-273 (LTLATALNLGWLILALKGFTA), and 284-304 (FIYSLNHMTILFVSIIIFAVF).

This sequence belongs to the UbiA prenyltransferase family. Protoheme IX farnesyltransferase subfamily. In terms of assembly, interacts with CtaA.

The protein localises to the cell membrane. The catalysed reaction is heme b + (2E,6E)-farnesyl diphosphate + H2O = Fe(II)-heme o + diphosphate. The protein operates within porphyrin-containing compound metabolism; heme O biosynthesis; heme O from protoheme: step 1/1. In terms of biological role, converts heme B (protoheme IX) to heme O by substitution of the vinyl group on carbon 2 of heme B porphyrin ring with a hydroxyethyl farnesyl side group. This Lysinibacillus sphaericus (strain C3-41) protein is Protoheme IX farnesyltransferase 1.